A 499-amino-acid chain; its full sequence is WD repeat-containing protein 55 homolog (499 aa).

Residues 1-130 (MHTHNNFKTP…EATFDLDVDD (130 aa)) form a disordered region. Composition is skewed to acidic residues over residues 12-23 (DEDELDDLDEDM) and 31-48 (IEQE…EYDL). A compositionally biased stretch (low complexity) spans 91-103 (DDAGGASAGGATS). Over residues 113-122 (PSGSNRQSEA) the composition is skewed to polar residues. WD repeat units follow at residues 154 to 193 (KLED…NKLL), 198 to 237 (VHSK…LKKL), 241 to 279 (AHDD…AIFE), 282 to 321 (ELED…MYVQ), 324 to 363 (PYEE…YHCD), and 408 to 447 (QHNM…DFGD). The tract at residues 480–499 (TKEDADDDDHDPSAGPSNMA) is disordered.

It belongs to the WD repeat WDR55 family.

The sequence is that of WD repeat-containing protein 55 homolog from Drosophila yakuba (Fruit fly).